The following is a 399-amino-acid chain: A-type ATP synthase subunit C (399 aa).

It belongs to the V-ATPase V0D/AC39 subunit family. The A-type ATPase is composed of subunits A(3), B(3), C, D, E(1 or 2), F, H(2), I and K(x).

The protein resides in the cell membrane. Its function is as follows. Component of the A-type ATP synthase that produces ATP from ADP in the presence of a proton gradient across the membrane. The protein is A-type ATP synthase subunit C of Methanocaldococcus jannaschii (strain ATCC 43067 / DSM 2661 / JAL-1 / JCM 10045 / NBRC 100440) (Methanococcus jannaschii).